The following is a 469-amino-acid chain: MTPATKLPGDVGPIHFVGIGGIGMSGIAEVLLNLGYVVQGSDLKSSRITQRLERLGATIFEGQRAENLEDAEVVVISSAIKPGNAELDEARLRGLPVVRRAEMLAELMRLKSNIAIGGTHGKTTTTTMMAELMVAGGFDPTVVNGGIIHAYGSNARMGQGEWMVVEADESDGTFNRLPATIAVVTNIDPEHMEHWGDFDRLRDGFYEFVSNLPFYGLAVCCTDHAEVQALVGRITDRRVVTYGFNAQADVRAVNLTYKGGVAHFDILLQAEGQKIEGCTLPMPGDHNVSNALSAVAVCRHLGMKREEIRTALAAFGGVNRRFTKVGEVDGVTIIDDYGHHPVEIAAVLKAARQAIGTEGEGRVIAVHQPHRYSRLSNLFDDFCACFNDADVVAIAEVFAAGEDPIEGASRDDLVAGLIRHGHRHARAILNEDDLLRLVREQTRPGDMVVCLGAGTISAWANGLPERLRG.

118–124 (GTHGKTT) provides a ligand contact to ATP.

It belongs to the MurCDEF family.

It localises to the cytoplasm. It catalyses the reaction UDP-N-acetyl-alpha-D-muramate + L-alanine + ATP = UDP-N-acetyl-alpha-D-muramoyl-L-alanine + ADP + phosphate + H(+). The protein operates within cell wall biogenesis; peptidoglycan biosynthesis. Functionally, cell wall formation. The sequence is that of UDP-N-acetylmuramate--L-alanine ligase from Ruegeria sp. (strain TM1040) (Silicibacter sp.).